We begin with the raw amino-acid sequence, 658 residues long: UvrABC system protein B (658 aa).

The region spanning 26-413 (EGINSGKKKQ…SPEVIEQIIR (388 aa)) is the Helicase ATP-binding domain. Position 39–46 (39–46 (GATGTGKT)) interacts with ATP. Residues 92–115 (YYDYYQPEAYVPQTDTFIEKDAQI) carry the Beta-hairpin motif. A Helicase C-terminal domain is found at 430-596 (QIDDLLGEIQ…TIQKGVRDVI (167 aa)). The UVR domain maps to 622–657 (EKTIAKMEAEMKEAAKALDFERAAELRDLLLELKAE).

Belongs to the UvrB family. In terms of assembly, forms a heterotetramer with UvrA during the search for lesions. Interacts with UvrC in an incision complex.

It localises to the cytoplasm. In terms of biological role, the UvrABC repair system catalyzes the recognition and processing of DNA lesions. A damage recognition complex composed of 2 UvrA and 2 UvrB subunits scans DNA for abnormalities. Upon binding of the UvrA(2)B(2) complex to a putative damaged site, the DNA wraps around one UvrB monomer. DNA wrap is dependent on ATP binding by UvrB and probably causes local melting of the DNA helix, facilitating insertion of UvrB beta-hairpin between the DNA strands. Then UvrB probes one DNA strand for the presence of a lesion. If a lesion is found the UvrA subunits dissociate and the UvrB-DNA preincision complex is formed. This complex is subsequently bound by UvrC and the second UvrB is released. If no lesion is found, the DNA wraps around the other UvrB subunit that will check the other stand for damage. This is UvrABC system protein B from Bacillus anthracis.